The chain runs to 270 residues: Chymotrypsin-like elastase family member 3B (270 aa).

A signal peptide (or 16) is located at residues 1-15 (MMLRLLSSLLLVAVA). Residues 16 to 28 (SGYGPPSSRPSSR) constitute a propeptide, activation peptide. Residues 29–268 (VVNGEDAVPY…FIDWIEETIA (240 aa)) form the Peptidase S1 domain. Residues C58 and C74 are joined by a disulfide bond. H73 serves as the catalytic Charge relay system. The N-linked (GlcNAc...) asparagine glycan is linked to N114. Residues C117 and C120 are joined by a disulfide bond. The active-site Charge relay system is D123. Intrachain disulfides connect C157-C223, C188-C204, and C213-C244. S217 (charge relay system) is an active-site residue.

The protein belongs to the peptidase S1 family. Elastase subfamily. As to expression, pancreas. Not detectable in keratinocytes.

The enzyme catalyses Preferential cleavage: Ala-|-Xaa. Does not hydrolyze elastin.. Efficient protease with alanine specificity but only little elastolytic activity. The protein is Chymotrypsin-like elastase family member 3B (CELA3B) of Homo sapiens (Human).